A 195-amino-acid chain; its full sequence is Peptidyl-tRNA hydrolase (195 aa).

Position 17 (Y17) interacts with tRNA. H22 (proton acceptor) is an active-site residue. Residues F68, N70, and N116 each coordinate tRNA.

Belongs to the PTH family. As to quaternary structure, monomer.

Its subcellular location is the cytoplasm. The enzyme catalyses an N-acyl-L-alpha-aminoacyl-tRNA + H2O = an N-acyl-L-amino acid + a tRNA + H(+). Its function is as follows. Hydrolyzes ribosome-free peptidyl-tRNAs (with 1 or more amino acids incorporated), which drop off the ribosome during protein synthesis, or as a result of ribosome stalling. Catalyzes the release of premature peptidyl moieties from peptidyl-tRNA molecules trapped in stalled 50S ribosomal subunits, and thus maintains levels of free tRNAs and 50S ribosomes. This is Peptidyl-tRNA hydrolase from Shewanella loihica (strain ATCC BAA-1088 / PV-4).